A 285-amino-acid polypeptide reads, in one-letter code: Phosphatidylglycerol--prolipoprotein diacylglyceryl transferase (285 aa).

A run of 4 helical transmembrane segments spans residues 30–50 (LEIRWYALSYVFGILFAHWHI), 67–87 (LMLWAVIGIILGGRTAYILLY), 103–123 (WHGGMSMHGGYVGCIIAVSIV), and 129–149 (VRVMPVLDLCACAAPLGLFLG). Residue Arg150 participates in a 1,2-diacyl-sn-glycero-3-phospho-(1'-sn-glycerol) binding. Helical transmembrane passes span 184 to 204 (SQVYEAMLEGLLPLLFMSILA), 213 to 233 (FGVLSHMFGAWYGIVRCAVEF), and 252 to 272 (GQVLSAPIAVVGIFMLVLTVL).

Belongs to the Lgt family.

It localises to the cell inner membrane. The catalysed reaction is L-cysteinyl-[prolipoprotein] + a 1,2-diacyl-sn-glycero-3-phospho-(1'-sn-glycerol) = an S-1,2-diacyl-sn-glyceryl-L-cysteinyl-[prolipoprotein] + sn-glycerol 1-phosphate + H(+). It participates in protein modification; lipoprotein biosynthesis (diacylglyceryl transfer). Functionally, catalyzes the transfer of the diacylglyceryl group from phosphatidylglycerol to the sulfhydryl group of the N-terminal cysteine of a prolipoprotein, the first step in the formation of mature lipoproteins. This chain is Phosphatidylglycerol--prolipoprotein diacylglyceryl transferase, found in Anaplasma marginale (strain Florida).